An 82-amino-acid chain; its full sequence is Delta-actitoxin-Aeq2b 3 (82 aa).

Positions 1–19 (MNRLMILVFAAVILALASA) are cleaved as a signal peptide. Positions 20 to 26 (DEDVDIT) are excised as a propeptide. 3 disulfide bridges follow: Cys32–Cys79, Cys34–Cys69, and Cys62–Cys80.

The protein belongs to the sea anemone sodium channel inhibitory toxin family. Type I subfamily.

It localises to the secreted. The protein localises to the nematocyst. Functionally, binds specifically to voltage-gated sodium channels (Nav), thereby delaying their inactivation during signal transduction. Causes death to crabs. This is Delta-actitoxin-Aeq2b 3 from Actinia equina (Beadlet anemone).